Here is a 92-residue protein sequence, read N- to C-terminus: Probable Fe(2+)-trafficking protein (92 aa).

It belongs to the Fe(2+)-trafficking protein family.

Functionally, could be a mediator in iron transactions between iron acquisition and iron-requiring processes, such as synthesis and/or repair of Fe-S clusters in biosynthetic enzymes. This is Probable Fe(2+)-trafficking protein from Shewanella woodyi (strain ATCC 51908 / MS32).